The sequence spans 236 residues: UPF0257 lipoprotein YnfC (236 aa).

The N-terminal stretch at 1 to 16 is a signal peptide; sequence MKYKLLPCLLAILLTG. Cysteine 17 carries the N-palmitoyl cysteine lipid modification. Cysteine 17 carries S-diacylglycerol cysteine lipidation.

Belongs to the UPF0257 family.

It is found in the cell membrane. The sequence is that of UPF0257 lipoprotein YnfC from Escherichia coli O81 (strain ED1a).